The following is a 245-amino-acid chain: UPF0246 protein LBUL_1917 (245 aa).

The protein belongs to the UPF0246 family.

This Lactobacillus delbrueckii subsp. bulgaricus (strain ATCC BAA-365 / Lb-18) protein is UPF0246 protein LBUL_1917.